Reading from the N-terminus, the 487-residue chain is Cytochrome P450 2C5 (487 aa).

Cys-432 contributes to the heme binding site.

The protein belongs to the cytochrome P450 family. Heme serves as cofactor.

The protein resides in the endoplasmic reticulum membrane. It localises to the microsome membrane. It carries out the reaction an organic molecule + reduced [NADPH--hemoprotein reductase] + O2 = an alcohol + oxidized [NADPH--hemoprotein reductase] + H2O + H(+). Cytochromes P450 are a group of heme-thiolate monooxygenases. In liver microsomes, this enzyme is involved in an NADPH-dependent electron transport pathway. It oxidizes a variety of structurally unrelated compounds, including steroids, fatty acids, and xenobiotics. The sequence is that of Cytochrome P450 2C5 (CYP2C5) from Oryctolagus cuniculus (Rabbit).